Consider the following 278-residue polypeptide: MCRRPDCGFSFSPGPVILLWCCLLLPIVSSAAVSVAPTAAEKVPAECPELTRRCLLGEVFEGDKYESWLRPLVNVTGRDGPLSQLIRYRPVTPEAANSVLLDEAFLDTLALLYNNPDQLRALLTLLSSDTAPRWMTVMRGYSECGDGSPAVYTCVDDLCRGYDLTRLSYGRSIFTEHVLGFELVPPSLFNVVVAIRNEATRTNRAVRLPVSTAAAPEGITLFYGLYNAVKEFCLRHQLDPPLLRHLDKYYAGLPPELKQTRVNLPAHSRYGPQAVDAR.

The first 30 residues, 1–30, serve as a signal peptide directing secretion; that stretch reads MCRRPDCGFSFSPGPVILLWCCLLLPIVSS. The region spanning 43-256 is the gL betaherpesvirus-type domain; that stretch reads VPAECPELTR…DKYYAGLPPE (214 aa). The cysteines at positions 154 and 159 are disulfide-linked.

Belongs to the herpesviridae glycoprotein L (gL) family. Betaherpesvirinae gL subfamily. Interacts with glycoprotein H (gH); this interaction is necessary for the correct processing and cell surface expression of gH. Forms the envelope pentamer complex (PC) composed of gH, gL, UL128, UL130, and UL131A. The pentamer interacts with host NRP2. Forms the envelope trimer complex composed of gH, gL, and gO. The trimer interacts with host PDGFRA. The trimer also interacts with host EPHA2.

Its subcellular location is the virion membrane. It is found in the host cell membrane. The protein resides in the host Golgi apparatus. It localises to the host trans-Golgi network. In terms of biological role, the heterodimer glycoprotein H-glycoprotein L is required for the fusion of viral and plasma membranes leading to virus entry into the host cell. Acts as a functional inhibitor of gH and maintains gH in an inhibited form. Upon binding to host integrins, gL dissociates from gH leading to activation of the viral fusion glycoproteins gB and gH. In human cytomegalovirus, forms two distincts complexes to mediate viral entry, a trimer and a pentamer at the surface of the virion envelope. The gH-gL-gO trimer is required for infection in fibroblasts by interacting with host PDGFRA, and in glioblastoma cells by interacting with host EPHA2. The gH-gL-UL128-UL130-UL131A pentamer is essential for viral entry in epithelial, endothelial and myeloid cells via interaction with host NRP2. The protein is Envelope glycoprotein L of Homo sapiens (Human).